The chain runs to 265 residues: Undecaprenyl-diphosphatase (265 aa).

Helical transmembrane passes span 19–39, 42–62, 80–100, 108–128, 143–163, 181–201, 220–240, and 243–263; these read FLPV…GFTG, ADSF…CLYW, IRGL…GLVA, LFNP…IFLV, MTPG…WPGF, SLAA…ATLY, IGFV…IVLV, and ITLR…FFFW.

The protein belongs to the UppP family.

It is found in the cell inner membrane. It carries out the reaction di-trans,octa-cis-undecaprenyl diphosphate + H2O = di-trans,octa-cis-undecaprenyl phosphate + phosphate + H(+). Catalyzes the dephosphorylation of undecaprenyl diphosphate (UPP). Confers resistance to bacitracin. The sequence is that of Undecaprenyl-diphosphatase from Solidesulfovibrio magneticus (strain ATCC 700980 / DSM 13731 / RS-1) (Desulfovibrio magneticus).